The primary structure comprises 279 residues: NADPH-dependent 7-cyano-7-deazaguanine reductase (279 aa).

86 to 88 (IES) contacts substrate. 88-89 (SK) is a binding site for NADPH. The active-site Thioimide intermediate is the cysteine 187. Residue aspartate 194 is the Proton donor of the active site. Residue 226–227 (HE) participates in substrate binding. 255–256 (RG) contacts NADPH.

It belongs to the GTP cyclohydrolase I family. QueF type 2 subfamily. As to quaternary structure, homodimer.

The protein resides in the cytoplasm. It carries out the reaction 7-aminomethyl-7-carbaguanine + 2 NADP(+) = 7-cyano-7-deazaguanine + 2 NADPH + 3 H(+). It participates in tRNA modification; tRNA-queuosine biosynthesis. Its function is as follows. Catalyzes the NADPH-dependent reduction of 7-cyano-7-deazaguanine (preQ0) to 7-aminomethyl-7-deazaguanine (preQ1). This is NADPH-dependent 7-cyano-7-deazaguanine reductase from Histophilus somni (strain 129Pt) (Haemophilus somnus).